A 206-amino-acid chain; its full sequence is Outer-membrane lipoprotein LolB (206 aa).

The signal sequence occupies residues 1–18; that stretch reads MKTFKFLTALFATAILTA. Cysteine 19 carries the N-palmitoyl cysteine lipid modification. Cysteine 19 carries S-diacylglycerol cysteine lipidation.

This sequence belongs to the LolB family. Monomer.

It localises to the cell outer membrane. Its function is as follows. Plays a critical role in the incorporation of lipoproteins in the outer membrane after they are released by the LolA protein. The sequence is that of Outer-membrane lipoprotein LolB from Haemophilus influenzae (strain PittEE).